We begin with the raw amino-acid sequence, 310 residues long: 1-aminocyclopropane-1-carboxylate oxidase 1 (310 aa).

Positions 113-133 (EELSKTMDEYVCQLHKFAERL) form a coiled coil. Residues 158 to 259 (PAFGTKVAKY…RLSIATFYNP (102 aa)) enclose the Fe2OG dioxygenase domain. Positions 182, 184, and 240 each coordinate Fe cation. 2-oxoglutarate is bound at residue Arg-250.

The protein belongs to the iron/ascorbate-dependent oxidoreductase family. Fe(2+) serves as cofactor.

It catalyses the reaction 1-aminocyclopropane-1-carboxylate + L-ascorbate + O2 = ethene + L-dehydroascorbate + hydrogen cyanide + CO2 + 2 H2O. It functions in the pathway alkene biosynthesis; ethylene biosynthesis via S-adenosyl-L-methionine; ethylene from S-adenosyl-L-methionine: step 2/2. Enzyme involved in the ethylene biosynthesis. May promote stem elongation by maximizing the extensibility cells, possibly by activating ethylene biosynthesis, in response to very-long-chain fatty acids (VLCFAs C20:0 to C30:0). The protein is 1-aminocyclopropane-1-carboxylate oxidase 1 (ACO1) of Arabidopsis thaliana (Mouse-ear cress).